The primary structure comprises 65 residues: MEVNMPTTEQGQKNKQMIPSPGPGGGSGPGPQAPKVEKPNTEEILKRMRKVDPDQARRYRQRTGE.

Over residues 1–17 (MEVNMPTTEQGQKNKQM) the composition is skewed to polar residues. The segment at 1 to 65 (MEVNMPTTEQ…ARRYRQRTGE (65 aa)) is disordered. The span at 35–65 (KVEKPNTEEILKRMRKVDPDQARRYRQRTGE) shows a compositional bias: basic and acidic residues. E65 is covalently cross-linked (Isoglutamyl lysine isopeptide (Glu-Lys) (interchain with K-? in acceptor proteins)).

This sequence belongs to the ubiquitin-like protein UBact family.

In terms of biological role, may function as a protein modifier covalently attached to lysine residues of substrate proteins. This may serve to target the modified proteins for degradation by proteasomes. This chain is Prokaryotic ubiquitin-like protein UBact, found in Methylacidiphilum infernorum (isolate V4) (Methylokorus infernorum (strain V4)).